The primary structure comprises 289 residues: Glycine--tRNA ligase alpha subunit (289 aa).

The protein belongs to the class-II aminoacyl-tRNA synthetase family. As to quaternary structure, tetramer of two alpha and two beta subunits.

It localises to the cytoplasm. The enzyme catalyses tRNA(Gly) + glycine + ATP = glycyl-tRNA(Gly) + AMP + diphosphate. The polypeptide is Glycine--tRNA ligase alpha subunit (Rickettsia akari (strain Hartford)).